A 204-amino-acid chain; its full sequence is GTP cyclohydrolase-2 (204 aa).

Position 49–53 (49–53) interacts with GTP; the sequence is RIHSE. Zn(2+) is bound by residues C54, C65, and C67. Residues Q70, 92-94, and T114 each bind GTP; that span reads EGR. D126 acts as the Proton acceptor in catalysis. The Nucleophile role is filled by R128. GTP is bound by residues T149 and K154.

This sequence belongs to the GTP cyclohydrolase II family. Zn(2+) is required as a cofactor.

The catalysed reaction is GTP + 4 H2O = 2,5-diamino-6-hydroxy-4-(5-phosphoribosylamino)-pyrimidine + formate + 2 phosphate + 3 H(+). It participates in cofactor biosynthesis; riboflavin biosynthesis; 5-amino-6-(D-ribitylamino)uracil from GTP: step 1/4. In terms of biological role, catalyzes the conversion of GTP to 2,5-diamino-6-ribosylamino-4(3H)-pyrimidinone 5'-phosphate (DARP), formate and pyrophosphate. In Shewanella baltica (strain OS155 / ATCC BAA-1091), this protein is GTP cyclohydrolase-2.